The following is a 267-amino-acid chain: Flap endonuclease Xni (267 aa).

Position 115 (aspartate 115) interacts with Mg(2+). Residues 171-261 (VAPAQLVDFW…LGFNLREIRY (91 aa)) form the 5'-3' exonuclease domain. Leucine 182, valine 193, and isoleucine 196 together coordinate K(+). The interval 195–200 (GIGPKT) is interaction with DNA.

This sequence belongs to the Xni family. Mg(2+) serves as cofactor. The cofactor is K(+).

In terms of biological role, has flap endonuclease activity. During DNA replication, flap endonucleases cleave the 5'-overhanging flap structure that is generated by displacement synthesis when DNA polymerase encounters the 5'-end of a downstream Okazaki fragment. The polypeptide is Flap endonuclease Xni (Aeromonas hydrophila subsp. hydrophila (strain ATCC 7966 / DSM 30187 / BCRC 13018 / CCUG 14551 / JCM 1027 / KCTC 2358 / NCIMB 9240 / NCTC 8049)).